The sequence spans 303 residues: Lipoyl synthase (303 aa).

[4Fe-4S] cluster is bound by residues C34, C39, C45, C60, C64, C67, and S273. Residues 46–262 (WSKKHATVMI…ERVARTKGFL (217 aa)) form the Radical SAM core domain.

Belongs to the radical SAM superfamily. Lipoyl synthase family. [4Fe-4S] cluster is required as a cofactor.

The protein localises to the cytoplasm. The catalysed reaction is [[Fe-S] cluster scaffold protein carrying a second [4Fe-4S](2+) cluster] + N(6)-octanoyl-L-lysyl-[protein] + 2 oxidized [2Fe-2S]-[ferredoxin] + 2 S-adenosyl-L-methionine + 4 H(+) = [[Fe-S] cluster scaffold protein] + N(6)-[(R)-dihydrolipoyl]-L-lysyl-[protein] + 4 Fe(3+) + 2 hydrogen sulfide + 2 5'-deoxyadenosine + 2 L-methionine + 2 reduced [2Fe-2S]-[ferredoxin]. The protein operates within protein modification; protein lipoylation via endogenous pathway; protein N(6)-(lipoyl)lysine from octanoyl-[acyl-carrier-protein]: step 2/2. In terms of biological role, catalyzes the radical-mediated insertion of two sulfur atoms into the C-6 and C-8 positions of the octanoyl moiety bound to the lipoyl domains of lipoate-dependent enzymes, thereby converting the octanoylated domains into lipoylated derivatives. In Rickettsia bellii (strain OSU 85-389), this protein is Lipoyl synthase.